The following is a 258-amino-acid chain: Type III pantothenate kinase (258 aa).

6–13 provides a ligand contact to ATP; the sequence is DVGNTNIV. Substrate contacts are provided by residues Tyr-100 and 107 to 110; that span reads GADR. The active-site Proton acceptor is the Asp-109. Residue Asp-129 coordinates K(+). Thr-132 contacts ATP. Thr-184 provides a ligand contact to substrate.

The protein belongs to the type III pantothenate kinase family. As to quaternary structure, homodimer. NH4(+) is required as a cofactor. It depends on K(+) as a cofactor.

It is found in the cytoplasm. It catalyses the reaction (R)-pantothenate + ATP = (R)-4'-phosphopantothenate + ADP + H(+). The protein operates within cofactor biosynthesis; coenzyme A biosynthesis; CoA from (R)-pantothenate: step 1/5. In terms of biological role, catalyzes the phosphorylation of pantothenate (Pan), the first step in CoA biosynthesis. This is Type III pantothenate kinase from Clostridium botulinum (strain Kyoto / Type A2).